The chain runs to 126 residues: MKINKKTIGGFLLIVFGISVFFGGGSFGFIIPLAIGSLMTYAGIKRFAAGKTITGIIVGGIGAIMLICSLPFVVGIALAAAMVYYGWKLMKNGSADNGVSSFDPEPASAAYQSHFDDEWEEFLKKK.

2 consecutive transmembrane segments (helical) span residues phenylalanine 11 to isoleucine 31 and isoleucine 56 to isoleucine 76.

The protein localises to the cell membrane. The chain is Protein LiaI (liaI) from Bacillus subtilis (strain 168).